Here is a 124-residue protein sequence, read N- to C-terminus: Phosphoribosyl-ATP pyrophosphatase (124 aa).

This sequence belongs to the PRA-PH family.

The protein resides in the cytoplasm. The enzyme catalyses 1-(5-phospho-beta-D-ribosyl)-ATP + H2O = 1-(5-phospho-beta-D-ribosyl)-5'-AMP + diphosphate + H(+). The protein operates within amino-acid biosynthesis; L-histidine biosynthesis; L-histidine from 5-phospho-alpha-D-ribose 1-diphosphate: step 2/9. The chain is Phosphoribosyl-ATP pyrophosphatase (hisE) from Ralstonia nicotianae (strain ATCC BAA-1114 / GMI1000) (Ralstonia solanacearum).